A 1394-amino-acid chain; its full sequence is MNQEVMNLFNPVVQPQAFDQIQISIASPEKILSWSYGEIKKPETINYRTFKPERDGLFCARIFGPIKDYECLCGKYKRMKYKGVICEKCGVEVTLSRVRRERMGHISLAAPVAHIWFLKSLPSRIGLLLDMTLKDLERILYFESYIVLDPGLTPLKDRQLLNEEDYLKAQDEYGQDSFTALIGAEAIREILRNMDLPKIAEDLKVEIAESTTELKPKKLAKRLKIIEAFMHSGNKPEWMILTEVPVIPPDLRPLVPLDGGRFATSDLNDLYRRVINRNNRLKRLIELRAPDIIVRNEKRMLQEAVDALFDNGRRGRVITGANKRPLKSLADMLKGKQGRFRQNLLGKRVDYSGRSVIVVGPELKLHQCGLPKKMALELFKPFIYSRLDAKGFSATVKQAKKLVEKEKPEVWDILDEVIREHPVMLNRAPTLHRLGIQAFEPKLIEGKAIQLHPLVCAAFNADFDGDQMAVHVPLSLEAQLEARVLMMSTNNILHPANGQPIIVPSQDIVLGLYYVTLMRDGEPGQGMMFANMGEIEHALNAKAITLHTKIKGRAWTFDENGEKVSKIFDTTPGRLILGQLLPHHVKIPFDVVNKLMTKKEISNMIDIVYRNCGQKETVIFCDRIMALGFREAFKAGISFGKDDMVVPETKPRIIEETSALAKEYEQQYNDGLITQVEKYNKVVDAWGKCSVKLADEMMARISAVQKDDDGRDKPINSIYMMSHSGARGSPTQMKQLAAMRGLMAKPSGEIIETPIISNFKEGLTVLEYFNSTHGARKGLADTALKTANSGYLTRRLVDVAQDAIITIPDCHSENGIRMRAIIDAGQIVASLETRILGRTAAEDLREADGTIIVPAGEMIEEIHVGRINAAGIQEVKIRSVLTCEAKNGVCAKCYGRDLARGTPVNMGEAVGVIAAQSIGEPGTQLTMRTFHIGGAAQIADQSFIESNFEGTVKIRNRHVARNTDGDLMVMARNVAVVIDGPDGTELAVHRVQYGARLKVDEGDKIKRGQRIAEWDPYTRPILTEIDGTIGFEDLVEGASMTETIDEATGIAKRMVIDWRLNQRSASLKPAMVIKTADGKVGKLQRGGEARYMLPVDSIIGVDPGGSVKAGDVIARISMESAKTRDITGGLPRVAELFEARRPKDHAIIAEASGTVQFGRDYKNKTRISIVPHEDGAEPIEYLIPKGKHIYLQDGDVVEKGDYIVDGNPAPHDILAIKGVEELAAYLVNEIQEVYRLQGVSINDKHIEVIVRQMLQKVDIVDSGDTDFLPGEQVDQLEFEEANIQAVENGGKPATGTPVLLGITKASLQTRSFISAASFQETTRVLTEAAVNGKADTLEGLKENVIVGRLIPAGTGAAMAKLRRVAVQRDELILAQKAETSEAPLVPIPHLPAAE.

Zn(2+) is bound by residues Cys71, Cys73, Cys86, and Cys89. Mg(2+) contacts are provided by Asp462, Asp464, and Asp466. Zn(2+) contacts are provided by Cys810, Cys883, Cys890, and Cys893.

It belongs to the RNA polymerase beta' chain family. As to quaternary structure, the RNAP catalytic core consists of 2 alpha, 1 beta, 1 beta' and 1 omega subunit. When a sigma factor is associated with the core the holoenzyme is formed, which can initiate transcription. Mg(2+) serves as cofactor. It depends on Zn(2+) as a cofactor.

The enzyme catalyses RNA(n) + a ribonucleoside 5'-triphosphate = RNA(n+1) + diphosphate. In terms of biological role, DNA-dependent RNA polymerase catalyzes the transcription of DNA into RNA using the four ribonucleoside triphosphates as substrates. In Beijerinckia indica subsp. indica (strain ATCC 9039 / DSM 1715 / NCIMB 8712), this protein is DNA-directed RNA polymerase subunit beta'.